Reading from the N-terminus, the 93-residue chain is Putative transmembrane protein ORF25 (93 aa).

A run of 3 helical transmembrane segments spans residues 1 to 21 (MAGI…NVNA), 22 to 42 (FLVL…YASI), and 60 to 80 (LWIF…VMSL).

It is found in the host membrane. The chain is Putative transmembrane protein ORF25 from His1 virus (isolate Australia/Victoria) (His1V).